The primary structure comprises 396 residues: 2,3-diketo-5-methylthiopentyl-1-phosphate enolase (396 aa).

Residue Lys-85 is the Proton acceptor of the active site. Residues Lys-134, 160–163, His-251, Gly-323, and 345–346 each bind substrate; these read KDDE and GG. Residues Lys-160, Asp-162, and Glu-163 each contribute to the Mg(2+) site. At Lys-160 the chain carries N6-carboxylysine.

It belongs to the RuBisCO large chain family. Type IV subfamily. Homodimer. The cofactor is Mg(2+).

It carries out the reaction 5-methylsulfanyl-2,3-dioxopentyl phosphate = 2-hydroxy-5-methylsulfanyl-3-oxopent-1-enyl phosphate. Its pathway is amino-acid biosynthesis; L-methionine biosynthesis via salvage pathway; L-methionine from S-methyl-5-thio-alpha-D-ribose 1-phosphate: step 3/6. Functionally, catalyzes the enolization of 2,3-diketo-5-methylthiopentyl-1-phosphate (DK-MTP-1-P) into 2-hydroxy-3-keto-5-methylthiopentenyl-1-phosphate (HK-MTPenyl-1-P). The sequence is that of 2,3-diketo-5-methylthiopentyl-1-phosphate enolase from Exiguobacterium sibiricum (strain DSM 17290 / CCUG 55495 / CIP 109462 / JCM 13490 / 255-15).